Reading from the N-terminus, the 200-residue chain is Glycerol-3-phosphate acyltransferase (200 aa).

4 helical membrane passes run 1–21 (MITV…FAVV), 84–104 (VIAG…FLAF), 116–136 (ILLG…MVVA), and 159–179 (FLLE…LLIL).

The protein belongs to the PlsY family. In terms of assembly, probably interacts with PlsX.

Its subcellular location is the cell inner membrane. It catalyses the reaction an acyl phosphate + sn-glycerol 3-phosphate = a 1-acyl-sn-glycero-3-phosphate + phosphate. It functions in the pathway lipid metabolism; phospholipid metabolism. Catalyzes the transfer of an acyl group from acyl-phosphate (acyl-PO(4)) to glycerol-3-phosphate (G3P) to form lysophosphatidic acid (LPA). This enzyme utilizes acyl-phosphate as fatty acyl donor, but not acyl-CoA or acyl-ACP. In Nitrosomonas europaea (strain ATCC 19718 / CIP 103999 / KCTC 2705 / NBRC 14298), this protein is Glycerol-3-phosphate acyltransferase.